A 517-amino-acid polypeptide reads, in one-letter code: Cytochrome P450 monooxygenase ausI (517 aa).

A helical transmembrane segment spans residues 8-28 (LAPLGQPWIAGLVVVSAVLYL). Heme is bound at residue Cys457.

Belongs to the cytochrome P450 family. Requires heme as cofactor.

Its subcellular location is the membrane. Its pathway is secondary metabolite biosynthesis; terpenoid biosynthesis. Its function is as follows. Cytochrome P450 monooxygenase; part of the gene cluster that mediates the biosynthesis of calidodehydroaustin, a fungal meroterpenoid. The first step of the pathway is the synthesis of 3,5-dimethylorsellinic acid by the polyketide synthase ausA. 3,5-dimethylorsellinic acid is then prenylated by the polyprenyl transferase ausN. Further epoxidation by the FAD-dependent monooxygenase ausM and cyclization by the probable terpene cyclase ausL lead to the formation of protoaustinoid A. Protoaustinoid A is then oxidized to spiro-lactone preaustinoid A3 by the combined action of the FAD-binding monooxygenases ausB and ausC, and the dioxygenase ausE. Acid-catalyzed keto-rearrangement and ring contraction of the tetraketide portion of preaustinoid A3 by ausJ lead to the formation of preaustinoid A4. The aldo-keto reductase ausK, with the help of ausH, is involved in the next step by transforming preaustinoid A4 into isoaustinone which is in turn hydroxylated by the P450 monooxygenase ausI to form austinolide. The cytochrome P450 monooxygenase ausG modifies austinolide to austinol. Austinol is further acetylated to austin by the O-acetyltransferase ausP, which spontaneously changes to dehydroaustin. The cytochrome P450 monooxygenase ausR then converts dehydroaustin is into 7-dehydrodehydroaustin. The hydroxylation catalyzed by ausR permits the O-acetyltransferase ausQ to add an additional acetyl group to the molecule, leading to the formation of acetoxydehydroaustin. The short chain dehydrogenase ausT catalyzes the reduction of the double bond present between carbon atoms 1 and 2 to convert 7-dehydrodehydroaustin into 1,2-dihydro-7-hydroxydehydroaustin. AusQ catalyzes not only an acetylation reaction but also the addition of the PKS ausV diketide product to 1,2-dihydro-7-hydroxydehydroaustin, forming precalidodehydroaustin. Finally, the iron/alpha-ketoglutarate-dependent dioxygenase converts precalidodehydroaustin into calidodehydroaustin. The protein is Cytochrome P450 monooxygenase ausI of Aspergillus calidoustus.